The sequence spans 214 residues: Uridine kinase (214 aa).

Residue G15–S22 participates in ATP binding.

This sequence belongs to the uridine kinase family.

Its subcellular location is the cytoplasm. The catalysed reaction is uridine + ATP = UMP + ADP + H(+). It catalyses the reaction cytidine + ATP = CMP + ADP + H(+). The protein operates within pyrimidine metabolism; CTP biosynthesis via salvage pathway; CTP from cytidine: step 1/3. It participates in pyrimidine metabolism; UMP biosynthesis via salvage pathway; UMP from uridine: step 1/1. In Aeromonas hydrophila subsp. hydrophila (strain ATCC 7966 / DSM 30187 / BCRC 13018 / CCUG 14551 / JCM 1027 / KCTC 2358 / NCIMB 9240 / NCTC 8049), this protein is Uridine kinase.